Here is a 155-residue protein sequence, read N- to C-terminus: Ribonuclease H (155 aa).

Residues 1 to 142 (MLKQVEIFTD…CDELARNAAG (142 aa)) enclose the RNase H type-1 domain. The Mg(2+) site is built by Asp-10, Glu-48, Asp-70, and Asp-134.

The protein belongs to the RNase H family. In terms of assembly, monomer. Mg(2+) serves as cofactor.

It localises to the cytoplasm. The enzyme catalyses Endonucleolytic cleavage to 5'-phosphomonoester.. In terms of biological role, endonuclease that specifically degrades the RNA of RNA-DNA hybrids. The protein is Ribonuclease H of Erwinia tasmaniensis (strain DSM 17950 / CFBP 7177 / CIP 109463 / NCPPB 4357 / Et1/99).